Here is a 448-residue protein sequence, read N- to C-terminus: Phosphoglucosamine mutase (448 aa).

Ser104 acts as the Phosphoserine intermediate in catalysis. Mg(2+) contacts are provided by Ser104, Asp243, Asp245, and Asp247. The residue at position 104 (Ser104) is a Phosphoserine.

This sequence belongs to the phosphohexose mutase family. It depends on Mg(2+) as a cofactor. Activated by phosphorylation.

The enzyme catalyses alpha-D-glucosamine 1-phosphate = D-glucosamine 6-phosphate. Its function is as follows. Catalyzes the conversion of glucosamine-6-phosphate to glucosamine-1-phosphate. The chain is Phosphoglucosamine mutase from Xylella fastidiosa (strain Temecula1 / ATCC 700964).